Here is a 432-residue protein sequence, read N- to C-terminus: tRNA modification GTPase MnmE (432 aa).

(6S)-5-formyl-5,6,7,8-tetrahydrofolate is bound by residues arginine 23, glutamate 85, and lysine 124. The TrmE-type G domain maps to 217–362 (GARLALIGAP…LKEAVREALL (146 aa)). Asparagine 227 is a K(+) binding site. GTP-binding positions include 227–232 (NAGKSS), 246–252 (SPIPGTT), and 271–274 (DTAG). Mg(2+) is bound at residue serine 231. Residues serine 246, isoleucine 248, and threonine 251 each contribute to the K(+) site. Mg(2+) is bound at residue threonine 252. Lysine 432 contacts (6S)-5-formyl-5,6,7,8-tetrahydrofolate.

Belongs to the TRAFAC class TrmE-Era-EngA-EngB-Septin-like GTPase superfamily. TrmE GTPase family. In terms of assembly, homodimer. Heterotetramer of two MnmE and two MnmG subunits. K(+) is required as a cofactor.

It localises to the cytoplasm. Its function is as follows. Exhibits a very high intrinsic GTPase hydrolysis rate. Involved in the addition of a carboxymethylaminomethyl (cmnm) group at the wobble position (U34) of certain tRNAs, forming tRNA-cmnm(5)s(2)U34. This chain is tRNA modification GTPase MnmE, found in Thermus thermophilus (strain ATCC 27634 / DSM 579 / HB8).